The sequence spans 56 residues: MGHQQLYWSHPRKFGQGSRSCRVCSNRHGLIRKYGLNMCRQCFRQYAKDIGFIKLD.

Serine 9 carries the post-translational modification Phosphoserine. Position 12 is an omega-N-methylarginine (arginine 12). 4 residues coordinate Zn(2+): cysteine 21, cysteine 24, cysteine 39, and cysteine 42. At lysine 48 the chain carries N6-acetyllysine.

The protein belongs to the universal ribosomal protein uS14 family. As to quaternary structure, component of the 40S small ribosomal subunit. Zn(2+) is required as a cofactor.

It is found in the cytoplasm. The protein localises to the cytosol. Its subcellular location is the rough endoplasmic reticulum. Component of the small ribosomal subunit. The ribosome is a large ribonucleoprotein complex responsible for the synthesis of proteins in the cell. The protein is Small ribosomal subunit protein uS14 (Rps29) of Mus musculus (Mouse).